Reading from the N-terminus, the 1491-residue chain is Membrane-associated guanylate kinase, WW and PDZ domain-containing protein 1 (1491 aa).

The 89-residue stretch at 17–105 folds into the PDZ 1 domain; that stretch reads ECTVKRGPQG…AVTFKAVRQG (89 aa). The Guanylate kinase-like domain occupies 96–287; it reads AVTFKAVRQG…APITDPSQKF (192 aa). 103–110 is a binding site for ATP; the sequence is RQGGRLNK. The tract at residues 236 to 267 is disordered; that stretch reads AENEEEDDVPEMNSSFTADSGEQEEHTLQETA. Residues 300–333 form the WW 1 domain; it reads GPLPENWEMAYTENGEVYFIDHNTKTTSWLDPRC. The residue at position 357 (Ser357) is a Phosphoserine. Positions 359-392 constitute a WW 2 domain; sequence LELPAGWEKIEDPVYGIYYVDHINRKTQYENPVL. Over residues 411–421 the composition is skewed to low complexity; the sequence is QQQQQQQQQQQ. The interval 411–462 is disordered; it reads QQQQQQQQQQQTEEWTEDHSALVPPVIPNHPPSNPEPAREVPLQGKPFFTRN. Residues 435–445 are compositionally biased toward pro residues; sequence PVIPNHPPSNP. The PDZ 2 domain occupies 472-554; that stretch reads HTKLRKSSRG…GASVDLELCR (83 aa). A compositionally biased stretch (polar residues) spans 586 to 600; sequence QETYDSPASHSSKTG. 3 disordered regions span residues 586–623, 720–832, and 932–987; these read QETYDSPASHSSKTGKVNGMKDARPSSPADVASNSSHG, QRGG…FGEC, and TENE…GGGS. Residues 643–721 enclose the PDZ 3 domain; that stretch reads TVHIVKGPMG…GSEVTLLVQR (79 aa). 2 positions are modified to phosphoserine: Ser730 and Ser741. Low complexity predominate over residues 742 to 752; it reads QNSSQHSVSSH. Residues 756–766 show a composition bias toward polar residues; the sequence is HTASPSHSTQV. Ser800 is modified (phosphoserine). One can recognise a PDZ 4 domain in the interval 813 to 895; the sequence is SGLSKGERER…DELICVDGTP (83 aa). Polar residues predominate over residues 939 to 951; sequence PASSHHSSNQPAS. Residues 970-1066 form the PDZ 5 domain; that stretch reads SSGSGSTSGI…DRILAVNGCS (97 aa). Residues 970-1066 form an interaction with FCHSD2 region; sequence SSGSGSTSGI…DRILAVNGCS (97 aa). Residues 975–987 show a composition bias toward gly residues; it reads STSGIGSGGGGGS. Ser1071 carries the post-translational modification Phosphoserine. Over residues 1112-1130 the composition is skewed to polar residues; sequence TTTHTPSQQGTQETRNTTK. 2 disordered regions span residues 1112–1143 and 1234–1491; these read TTTHTPSQQGTQETRNTTKPKQESQFEFKAPQ and DGSV…DLSI. Residues 1124 to 1206 form the PDZ 6 domain; the sequence is ETRNTTKPKQ…DEILEINGET (83 aa). Basic and acidic residues-rich tracts occupy residues 1278-1338, 1354-1396, and 1403-1491; these read DLHK…DAQA, KRRE…DGSP, and LERL…DLSI. Residues Ser1361 and Ser1412 each carry the phosphoserine modification.

Part of a complex composed of AMOTL2, MAGI1 and CDH5, within the complex AMOTL2 acts as a scaffold protein for the interaction of MAGI1 with CDH5. The complex is required for coupling actin fibers to cell junctions in endothelial cells. Interacts through its WW 2 domain with SYNPO and through its PDZ 5 domain with ACTN4. Interacts with cytoplasmic domain of ADGRB1. Interacts via its WW domains with DRPLA. Interacts with ESAM, LRP2 and CXADR. May interact with CTNNB1. Interacts through its PDZ 1 domain with NET1. Interacts with ASIC3 and AMOT. Interacts with FCHSD2. Interacts with IGSF5/JAM4 and through its PDZ 2 and 3 domains with NPHS1 forming a tripartite complex. Interacts with DDN. Interacts with DLL1. Interacts with KCNJ10 and possibly with KCNJ10/KCNJ16 heterodimer; this interaction may facilitate KCNJ10/KCNJ16 potassium channel expression at the basolateral membrane in kidney tubular cells. Interacts with PRRG4 (via cytoplasmic domain). As to quaternary structure, interacts (via PDZ domain) with RAPGEF2. As to expression, widely expressed with the exception of skeletal muscle. Isoform 1, isoform 2 and isoform 6 are highly expressed in colon, kidney, lung, liver, and pancreas. Isoform 5 is predominantly expressed in brain and heart. Isoform 3 and isoform 4 are highly expressed in pancreas and brain.

It is found in the cell junction. Its subcellular location is the tight junction. It localises to the cell membrane. In terms of biological role, plays a role in coupling actin fibers to cell junctions in endothelial cells, via its interaction with AMOTL2 and CDH5. May regulate acid-induced ASIC3 currents by modulating its expression at the cell surface. This is Membrane-associated guanylate kinase, WW and PDZ domain-containing protein 1 (MAGI1) from Homo sapiens (Human).